Here is a 360-residue protein sequence, read N- to C-terminus: Fe(3+) ions import ATP-binding protein FbpC (360 aa).

The ABC transporter domain occupies 4 to 236 (LEIKGLHKHY…PKDRMIAEFL (233 aa)). 36 to 43 (GPSGCGKT) contributes to the ATP binding site.

The protein belongs to the ABC transporter superfamily. Fe(3+) ion importer (TC 3.A.1.10) family. The complex is composed of two ATP-binding proteins (FbpC), two transmembrane proteins (FbpB) and a solute-binding protein (FbpA).

The protein localises to the cell inner membrane. The enzyme catalyses Fe(3+)(out) + ATP + H2O = Fe(3+)(in) + ADP + phosphate + H(+). In terms of biological role, part of the ABC transporter complex FbpABC involved in Fe(3+) ions import. Responsible for energy coupling to the transport system. The protein is Fe(3+) ions import ATP-binding protein FbpC of Mesorhizobium japonicum (strain LMG 29417 / CECT 9101 / MAFF 303099) (Mesorhizobium loti (strain MAFF 303099)).